Consider the following 145-residue polypeptide: tRNA-specific adenosine deaminase (145 aa).

The 116-residue stretch at 1–116 (MREALKQAEI…SNLRYFNSKA (116 aa)) folds into the CMP/dCMP-type deaminase domain. Position 48 (H48) interacts with Zn(2+). Catalysis depends on E50, which acts as the Proton donor. The Zn(2+) site is built by C78 and C81.

It belongs to the cytidine and deoxycytidylate deaminase family. Homodimer. Zn(2+) is required as a cofactor.

It carries out the reaction adenosine(34) in tRNA + H2O + H(+) = inosine(34) in tRNA + NH4(+). Catalyzes the deamination of adenosine to inosine at the wobble position 34 of tRNA(Arg2). The protein is tRNA-specific adenosine deaminase of Rickettsia bellii (strain RML369-C).